We begin with the raw amino-acid sequence, 415 residues long: Serine hydroxymethyltransferase (415 aa).

(6S)-5,6,7,8-tetrahydrofolate is bound by residues Leu-119 and Gly-123–Leu-125. At Lys-228 the chain carries N6-(pyridoxal phosphate)lysine. Residue Ser-353–Phe-355 coordinates (6S)-5,6,7,8-tetrahydrofolate.

The protein belongs to the SHMT family. Homodimer. Pyridoxal 5'-phosphate is required as a cofactor.

Its subcellular location is the cytoplasm. It catalyses the reaction (6R)-5,10-methylene-5,6,7,8-tetrahydrofolate + glycine + H2O = (6S)-5,6,7,8-tetrahydrofolate + L-serine. The protein operates within one-carbon metabolism; tetrahydrofolate interconversion. It functions in the pathway amino-acid biosynthesis; glycine biosynthesis; glycine from L-serine: step 1/1. Catalyzes the reversible interconversion of serine and glycine with tetrahydrofolate (THF) serving as the one-carbon carrier. Also exhibits THF-independent aldolase activity toward beta-hydroxyamino acids, producing glycine and aldehydes, via a retro-aldol mechanism. This chain is Serine hydroxymethyltransferase, found in Haloarcula marismortui (strain ATCC 43049 / DSM 3752 / JCM 8966 / VKM B-1809) (Halobacterium marismortui).